The chain runs to 392 residues: Nucleolysin TIAR (392 aa).

2 RRM domains span residues arginine 9–threonine 102 and phenylalanine 114–arginine 192. Residue lysine 139 is modified to N6-acetyllysine. The residue at position 218 (serine 218) is a Phosphoserine. Residues cysteine 222–glutamate 294 enclose the RRM 3 domain. Residues glycine 363 to glutamine 392 are disordered. The span at glycine 369 to asparagine 380 shows a compositional bias: pro residues.

Interacts with FASTK. In terms of processing, phosphorylated by MAPK14 following DNA damage, releasing TIAR from GADD45A mRNA. In terms of tissue distribution, expressed both in primordial germ cells (PGCs) and in neighboring somatic cells.

The protein resides in the nucleus. It is found in the cytoplasm. Its subcellular location is the stress granule. The protein localises to the cytolytic granule. Functionally, RNA-binding protein involved in alternative pre-RNA splicing and in cytoplasmic stress granules formation. Shows a preference for uridine-rich RNAs. Activates splicing of alternative exons with weak 5' splice sites followed by a U-rich stretch on its own pre-mRNA and on TIA1 mRNA. Promotes the inclusion of TIA1 exon 5 to give rise to the long isoform (isoform a) of TIA1. Acts downstream of the stress-induced phosphorylation of EIF2S1/EIF2A to promote the recruitment of untranslated mRNAs to cytoplasmic stress granules (SG). Possesses nucleolytic activity against cytotoxic lymphocyte target cells. May be involved in apoptosis. This Mus musculus (Mouse) protein is Nucleolysin TIAR (Tial1).